A 435-amino-acid chain; its full sequence is Cytokine-dependent hematopoietic cell linker (435 aa).

A phosphotyrosine; by LYN mark is found at tyrosine 69 and tyrosine 96. The segment at 155 to 303 (KINKTPLPPP…PDPTKPDEKD (149 aa)) is disordered. The tract at residues 160 to 165 (PLPPPR) is mediates interaction with PLCG1; essential for BCR signaling; involved in restoration of BCR-induced calcium response and ERK2 and JNK2 activation in BLNK-deficient cells expressing LAT. The segment at 178–182 (PPAPP) is mediates interaction with LAT, GRB2, and FGR; involved in translocation to the glycolipid-enriched microdomain and restoration of BCR-induced calcium response in BLNK-deficient DT40 cells expressing LAT. A compositionally biased stretch (polar residues) spans 226 to 249 (PESSCPSSNQNTQKSPPAIASSSY). Residues 290-303 (NSEKPDPTKPDEKD) show a composition bias toward basic and acidic residues. The region spanning 309 to 418 (WYIGEYSRQA…RKQCYLTQPL (110 aa)) is the SH2 domain.

When phosphorylated, interacts with PLCG1, PLCG2, GRB2, VAV and LAT. Associated with a tyrosine-phosphorylated polypeptide (p92) in response to immunoreceptor stimulation. Interacts with LBR and AGO2. Interacts with FGR. Part of a complex consisting of CLNK, SKAP1 and FYB1. Interacts (via SH2 domain) with FYB1; this interaction allows SKAP1 and FYB1 to promote tyrosine phosphorylation of CLNK by LYN. Interacts (via SH2 domain) with MAP4K1. Post-translationally, tyrosine-phosphorylated upon BCR cross-linking. Tyrosine phosphorylation at both Tyr-69 and Tyr-96 are required for BCR-induced calcium response and are essential to restore PLCG2-mediated signaling in BLNK-deficient DT40 cells, but this phosphorylation is dispensable in cells expressing LAT. Interacts with the SH2 domain of PLCG1 via phosphorylated Tyr-96. Tyrosine phosphorylation is increased when complexed with SKAP1 and FYB1. Expressed in T-cells, mast cells, natural killer and natural killer T cells (at protein level). Expressed in cytokine-stimulated hemopoietic cells.

It is found in the cytoplasm. Functionally, an adapter protein which plays a role in the regulation of immunoreceptor signaling, including PLC-gamma-mediated B-cell antigen receptor (BCR) signaling and FC-epsilon R1-mediated mast cell degranulation. Together with FGR, it acts as a negative regulator of natural killer cell-activating receptors and inhibits interferon-gamma production. Acts as a positive regulator of both T-cell receptor and natural killer T (NKT) cell receptor signaling in CD4-positive NKT cells. Together with MAP4K1, it enhances CD3-triggered activation of T-cells and subsequent IL2 production. May be involved in tumor necrosis factor induced cell death by promoting reactive oxidative species generation, and MLKL oligomerization, ultimately leading to necrosis. Involved in phosphorylation of LAT. May be involved in high affinity immunoglobulin epsilon receptor signaling in mast cells. This Mus musculus (Mouse) protein is Cytokine-dependent hematopoietic cell linker (Clnk).